The sequence spans 739 residues: Oxysterol-binding protein-related protein 9 (739 aa).

The region spanning 2 to 99 (ASIMEGPLSK…WIHALEETIL (98 aa)) is the PH domain. Disordered stretches follow at residues 220 to 292 (TQAS…SYSS) and 306 to 371 (SSTS…ESVE). Residues 249 to 259 (NLGSRQSPTPI) are compositionally biased toward polar residues. A compositionally biased stretch (low complexity) spans 260–276 (STGSGQSAPSSSLTSPS). Composition is skewed to polar residues over residues 277–292 (HVNL…SYSS), 306–330 (SSTS…STGA), and 338–352 (TESL…TNEA).

This sequence belongs to the OSBP family.

It carries out the reaction a 1,2-diacyl-sn-glycero-3-phospho-(1D-myo-inositol 4-phosphate)(out) + a 1,2-diacyl-sn-glycero-3-phospho-L-serine(in) = a 1,2-diacyl-sn-glycero-3-phospho-(1D-myo-inositol 4-phosphate)(in) + a 1,2-diacyl-sn-glycero-3-phospho-L-serine(out). Interacts with OSBPL11 to function as lipid transfer proteins. Together they form a heterodimer that localizes at the ER-trans-Golgi membrane contact sites, and exchanges phosphatidylserine (1,2-diacyl-sn-glycero-3-phospho-L-serine, PS) for phosphatidylinositol-4-phosphate (1,2-diacyl-sn-glycero-3-phospho-(1D-myo-inositol 4-phosphate), PI(4)P) between the two organelles, a step that is critical for sphingomyelin synthesis in the Golgi complex. The protein is Oxysterol-binding protein-related protein 9 (osbpl9) of Xenopus tropicalis (Western clawed frog).